The following is a 146-amino-acid chain: Hemoglobin subunit beta (146 aa).

At V1 the chain carries N-acetylvaline. One can recognise a Globin domain in the interval 2 to 146 (HLTNEEKTAV…VATALAHKYH (145 aa)). The residue at position 44 (S44) is a Phosphoserine. The residue at position 59 (K59) is an N6-acetyllysine. Heme b is bound at residue H63. An N6-acetyllysine modification is found at K82. Heme b is bound at residue H92. C93 is subject to S-nitrosocysteine. At K144 the chain carries N6-acetyllysine.

The protein belongs to the globin family. As to quaternary structure, heterotetramer of two alpha chains and two beta chains. As to expression, red blood cells.

Its function is as follows. Involved in oxygen transport from the lung to the various peripheral tissues. The polypeptide is Hemoglobin subunit beta (HBB) (Lyroderma lyra (Greater Asian false-vampire bat)).